Here is a 417-residue protein sequence, read N- to C-terminus: Serine hydroxymethyltransferase 2 (417 aa).

(6S)-5,6,7,8-tetrahydrofolate contacts are provided by residues Leu-121 and Gly-125–Leu-127. Lys-230 bears the N6-(pyridoxal phosphate)lysine mark. Ser-355–Phe-357 lines the (6S)-5,6,7,8-tetrahydrofolate pocket.

The protein belongs to the SHMT family. In terms of assembly, homodimer. Requires pyridoxal 5'-phosphate as cofactor.

The protein resides in the cytoplasm. It catalyses the reaction (6R)-5,10-methylene-5,6,7,8-tetrahydrofolate + glycine + H2O = (6S)-5,6,7,8-tetrahydrofolate + L-serine. The protein operates within one-carbon metabolism; tetrahydrofolate interconversion. It participates in amino-acid biosynthesis; glycine biosynthesis; glycine from L-serine: step 1/1. Functionally, catalyzes the reversible interconversion of serine and glycine with tetrahydrofolate (THF) serving as the one-carbon carrier. This reaction serves as the major source of one-carbon groups required for the biosynthesis of purines, thymidylate, methionine, and other important biomolecules. Also exhibits THF-independent aldolase activity toward beta-hydroxyamino acids, producing glycine and aldehydes, via a retro-aldol mechanism. This Pseudomonas savastanoi pv. phaseolicola (strain 1448A / Race 6) (Pseudomonas syringae pv. phaseolicola (strain 1448A / Race 6)) protein is Serine hydroxymethyltransferase 2.